The chain runs to 502 residues: ATP synthase subunit alpha (502 aa).

169-176 contacts ATP; that stretch reads GDRQTGKT.

This sequence belongs to the ATPase alpha/beta chains family. As to quaternary structure, F-type ATPases have 2 components, CF(1) - the catalytic core - and CF(0) - the membrane proton channel. CF(1) has five subunits: alpha(3), beta(3), gamma(1), delta(1), epsilon(1). CF(0) has three main subunits: a(1), b(2) and c(9-12). The alpha and beta chains form an alternating ring which encloses part of the gamma chain. CF(1) is attached to CF(0) by a central stalk formed by the gamma and epsilon chains, while a peripheral stalk is formed by the delta and b chains.

The protein localises to the cell inner membrane. It carries out the reaction ATP + H2O + 4 H(+)(in) = ADP + phosphate + 5 H(+)(out). Functionally, produces ATP from ADP in the presence of a proton gradient across the membrane. The alpha chain is a regulatory subunit. This Solidesulfovibrio magneticus (strain ATCC 700980 / DSM 13731 / RS-1) (Desulfovibrio magneticus) protein is ATP synthase subunit alpha.